A 275-amino-acid chain; its full sequence is MASLQTQMISFYLIFLSILLTTIFFFKVNSTETTSFSITKFSPDQKNLIFQGDGYTTKGKLTLTKAVKSTVGRALYSTPIHIWDRDTGNVANFVTSFTFVIDAPSSYNVADGFTFFIAPVDTKPQTGGGYLGVFNSKEYDKTSQTVAVEFDTFYNAAWDPSNKERHIGIDVNSIKSVNTKSWNLQNGERANVVIAFNAATNVLTVTLTYPNSLEEENVTSYTLNEVVPLKDVVPEWVRIGFSATTGAEFAAHEVHSWSFHSELGGTSSSKQAADA.

A signal peptide spans 1-30 (MASLQTQMISFYLIFLSILLTTIFFFKVNS). Residues D111 and G129 each coordinate D-glucose. Mn(2+)-binding residues include E149 and D151. Ca(2+)-binding residues include D151, F153, N155, and D159. D159 and H166 together coordinate Mn(2+). Positions 211-217 (NSLEEEN) are excised as a propeptide. D-glucose-binding residues include G246 and A247. A propeptide spanning residues 270 to 275 (KQAADA) is cleaved from the precursor.

The protein belongs to the leguminous lectin family. In terms of assembly, heterotetramer of two alpha and two beta chains. Post-translationally, the mature form consists of two chains, alpha and beta, produced by cleavage of the immature protein. These remain cleaved, yet fold together to form one subunit.

D-mannose specific lectin. The protein is Lectin of Lens culinaris subsp. culinaris (Cultivated lentil).